The chain runs to 310 residues: Tagatose-6-phosphate kinase (310 aa).

It belongs to the carbohydrate kinase PfkB family. LacC subfamily.

It carries out the reaction D-tagatofuranose 6-phosphate + ATP = D-tagatofuranose 1,6-bisphosphate + ADP + H(+). It functions in the pathway carbohydrate metabolism; D-tagatose 6-phosphate degradation; D-glyceraldehyde 3-phosphate and glycerone phosphate from D-tagatose 6-phosphate: step 1/2. This is Tagatose-6-phosphate kinase from Staphylococcus aureus (strain MRSA252).